A 215-amino-acid chain; its full sequence is Beta-crystallin A3-1 (215 aa).

The tract at residues 1–30 (MEIPVDQTEREDITSEKMAQINPLPVHLGP) is N-terminal arm. Beta/gamma crystallin 'Greek key' domains lie at 31 to 70 (WKIT…KVEC) and 71 to 117 (GAWI…RPIC). The connecting peptide stretch occupies residues 118 to 123 (SANHIE). 2 consecutive Beta/gamma crystallin 'Greek key' domains span residues 124-165 (SKLV…KVQC) and 166-214 (GAWV…RRIQ).

The protein belongs to the beta/gamma-crystallin family. As to quaternary structure, homo/heterodimer, or complexes of higher-order. The structure of beta-crystallin oligomers seems to be stabilized through interactions between the N-terminal arms. Post-translationally, the N-terminus is blocked.

In terms of biological role, crystallins are the dominant structural components of the vertebrate eye lens. This chain is Beta-crystallin A3-1, found in Aquarana catesbeiana (American bullfrog).